Reading from the N-terminus, the 441-residue chain is Transcriptional regulatory protein ZraR (441 aa).

Residues 7 to 121 (DILVVDDDIS…NLQATLEKAL (115 aa)) form the Response regulatory domain. A 4-aspartylphosphate modification is found at Asp-56. The region spanning 141-370 (MVGKSPAMQH…LENAVERAVV (230 aa)) is the Sigma-54 factor interaction domain. The ATP site is built by Gly-172, Thr-173, Arg-329, and Arg-359. The H-T-H motif DNA-binding region spans 421–440 (KTEAARQLGITRKTLLAKLS).

In terms of assembly, monomer. Phosphorylated by ZraS.

The protein resides in the cytoplasm. Activity of the ZraS/ZraR two-component system is repressed by the zinc-bound form of ZraP, which probably interacts with the periplasmic region of ZraS. Its function is as follows. Part of the Zra signaling pathway, an envelope stress response (ESR) system composed of the periplasmic accessory protein ZraP, the histidine kinase ZraS and the transcriptional regulator ZraR. The ZraPSR system contributes to antibiotic resistance and is important for membrane integrity in the presence of membrane-targeting biocides. ZraR is a member of the two-component regulatory system ZraS/ZraR. When activated by ZraS, acts in conjunction with sigma-54 to regulate the expression of zraP in the presence of high Zn(2+) or Pb(2+) concentrations. Also positively autoregulates the expression of the zraSR operon. Binds to a region within the zraP-zraSR intergenic region that is characterized by two inverted repeats separated by a 14 bp spacer. In addition, controls a regulon of genes of diverse functions that may be critical to maintain envelope integrity and cell survival under stressful conditions. The system has no direct role in zinc or copper resistance. This is Transcriptional regulatory protein ZraR from Escherichia coli (strain K12).